Here is a 474-residue protein sequence, read N- to C-terminus: UDP-N-acetylmuramoyl-L-alanyl-D-glutamate--2,6-diaminopimelate ligase (474 aa).

A UDP-N-acetyl-alpha-D-muramoyl-L-alanyl-D-glutamate-binding site is contributed by Ser-21. An ATP-binding site is contributed by 93-99 (GTNGKSS). Residues 139–140 (TT), Ser-166, Gln-172, and Arg-174 each bind UDP-N-acetyl-alpha-D-muramoyl-L-alanyl-D-glutamate. Lys-206 is modified (N6-carboxylysine). Meso-2,6-diaminopimelate contacts are provided by residues Arg-367, 391-394 (DNPR), Gly-441, and Glu-445. The short motif at 391-394 (DNPR) is the Meso-diaminopimelate recognition motif element.

Belongs to the MurCDEF family. MurE subfamily. Mg(2+) serves as cofactor. Post-translationally, carboxylation is probably crucial for Mg(2+) binding and, consequently, for the gamma-phosphate positioning of ATP.

It localises to the cytoplasm. The enzyme catalyses UDP-N-acetyl-alpha-D-muramoyl-L-alanyl-D-glutamate + meso-2,6-diaminopimelate + ATP = UDP-N-acetyl-alpha-D-muramoyl-L-alanyl-gamma-D-glutamyl-meso-2,6-diaminopimelate + ADP + phosphate + H(+). Its pathway is cell wall biogenesis; peptidoglycan biosynthesis. In terms of biological role, catalyzes the addition of meso-diaminopimelic acid to the nucleotide precursor UDP-N-acetylmuramoyl-L-alanyl-D-glutamate (UMAG) in the biosynthesis of bacterial cell-wall peptidoglycan. The sequence is that of UDP-N-acetylmuramoyl-L-alanyl-D-glutamate--2,6-diaminopimelate ligase from Rickettsia bellii (strain RML369-C).